Here is a 501-residue protein sequence, read N- to C-terminus: Pre-mRNA-splicing factor 38B (501 aa).

Residues 1–11 (MAGSQQQQQQQ) are compositionally biased toward low complexity. 2 disordered regions span residues 1–28 (MAGSQQQQQQQAVSKPTGGKHGNNLPLW) and 208–501 (DQHM…ADSP). The segment covering 243–273 (GDKRRSRTPRRSPSPRKSQNRSRSRSHHRER) has biased composition (basic residues). Positions 281–302 (ELERERDRQRKEREGKDRDRDR) form a coiled coil. Residues 281–328 (ELERERDRQRKEREGKDRDRDRDRDRERDRERDRDRRRSRTPDRNAER) show a composition bias toward basic and acidic residues. Over residues 329-341 (RRSRSRERRRSRS) the composition is skewed to basic residues. Residues 342–408 (TSRDKRTERK…EEKKHREEKR (67 aa)) show a composition bias toward basic and acidic residues. Residues 409–435 (SKRSRSRSRDRKHKAERSSKKRSRSGS) are compositionally biased toward basic residues. A compositionally biased stretch (basic and acidic residues) spans 437-447 (SRQEAGEEKNR). The span at 448–468 (KRERSHSKDRQHKRSRSKERS) shows a compositional bias: basic residues. Basic and acidic residues predominate over residues 469–491 (HRRESSNERIHARQERPSSESGE). The segment covering 492-501 (RTNSVRADSP) has biased composition (polar residues).

It belongs to the PRP38 family.

It is found in the nucleus. In terms of biological role, may be required for pre-mRNA splicing. The sequence is that of Pre-mRNA-splicing factor 38B (prpf38b) from Danio rerio (Zebrafish).